Here is a 124-residue protein sequence, read N- to C-terminus: Tax1-binding protein 3 (124 aa).

S2 is modified (N-acetylserine). In terms of domain architecture, PDZ spans 15–112 (RVEIHKLRQG…EVVRLLVTRQ (98 aa)). Phosphoserine is present on S61.

In terms of assembly, interacts (via its PDZ domain) with GLS2. Interacts (via its PDZ domain) with RTKN (via the C-terminal region); this interaction facilitates Rho-mediated activation of the FOS serum response element (SRE). Interacts (via its PDZ domain) with CTNNB1; this interaction inhibits the transcriptional activity of CTNNB1. Interacts with HTLV-1 TAX protein. Interacts (via PDZ domain) with ARHGEF16. Interacts (via PDZ domain) with KCNJ4 (via C-terminus). Competes with LIN7A for KCNJ4 binding. Interacts with ADGRB2. In terms of tissue distribution, ubiquitous. Detected in brain, heart, kidney, lung, small intestine and skeletal muscle. Detected in various cell lines including HeLa. Weakly expressed in peripheral blood leukocytes.

Its subcellular location is the cytoplasm. The protein resides in the nucleus. It localises to the cell membrane. Functionally, may regulate a number of protein-protein interactions by competing for PDZ domain binding sites. Binds CTNNB1 and may thereby act as an inhibitor of the Wnt signaling pathway. Competes with LIN7A for KCNJ4 binding, and thereby promotes KCNJ4 internalization. May play a role in the Rho signaling pathway. May play a role in activation of CDC42 by the viral protein HPV16 E6. This Homo sapiens (Human) protein is Tax1-binding protein 3.